The primary structure comprises 118 residues: MNAYELQALRHIFAMTIDECATWIAQTGDSESWRQWENGKCAIPDRVVEQLLAMRQQRKKHLHAIIEKINNRIGNNTMRFFPDLTAFQRVYPDGNFIDWKIYQSVAAELYAHDLERLC.

This is an uncharacterized protein from Escherichia coli (strain K12).